We begin with the raw amino-acid sequence, 144 residues long: Large ribosomal subunit protein uL13 (144 aa).

The protein belongs to the universal ribosomal protein uL13 family. In terms of assembly, part of the 50S ribosomal subunit.

In terms of biological role, this protein is one of the early assembly proteins of the 50S ribosomal subunit, although it is not seen to bind rRNA by itself. It is important during the early stages of 50S assembly. This Moorella thermoacetica (strain ATCC 39073 / JCM 9320) protein is Large ribosomal subunit protein uL13.